The primary structure comprises 298 residues: N-acetylmuramic acid 6-phosphate etherase (298 aa).

An SIS domain is found at 55–218; that stretch reads IHAQVSGGGR…STGLMIKSGK (164 aa). Catalysis depends on E83, which acts as the Proton donor. Residue E114 is part of the active site.

It belongs to the GCKR-like family. MurNAc-6-P etherase subfamily. As to quaternary structure, homodimer.

It catalyses the reaction N-acetyl-D-muramate 6-phosphate + H2O = N-acetyl-D-glucosamine 6-phosphate + (R)-lactate. The protein operates within amino-sugar metabolism; 1,6-anhydro-N-acetylmuramate degradation. Its pathway is amino-sugar metabolism; N-acetylmuramate degradation. It functions in the pathway cell wall biogenesis; peptidoglycan recycling. Specifically catalyzes the cleavage of the D-lactyl ether substituent of MurNAc 6-phosphate, producing GlcNAc 6-phosphate and D-lactate. Together with AnmK, is also required for the utilization of anhydro-N-acetylmuramic acid (anhMurNAc) either imported from the medium or derived from its own cell wall murein, and thus plays a role in cell wall recycling. The sequence is that of N-acetylmuramic acid 6-phosphate etherase from Shigella sonnei (strain Ss046).